A 372-amino-acid polypeptide reads, in one-letter code: N-acetylneuraminate epimerase 1 (372 aa).

Residues 1 to 25 (MITMKVKNFIYLPFCLFIGTSVAGA) form the signal peptide. Kelch repeat units lie at residues 44 to 88 (KIYI…TIID), 90 to 141 (KIYV…FIHN), 143 to 177 (HAVS…KVNR), 178 to 223 (DYFS…IFAE), 226 to 269 (IYIL…VSGA), 291 to 340 (EKYS…PWQG), and 342 to 371 (MLIL…IKIV). Glu232 serves as the catalytic Proton acceptor.

Belongs to the NanM family. As to quaternary structure, homodimer.

The protein localises to the periplasm. The enzyme catalyses N-acetyl-alpha-neuraminate = N-acetyl-beta-neuraminate. Functionally, converts alpha-N-acetylneuranimic acid (Neu5Ac) to the beta-anomer, accelerating the equilibrium between the alpha- and beta-anomers. Probably facilitates sialidase-negative bacteria to compete successfully for limited amounts of extracellular Neu5Ac, which is likely taken up in the beta-anomer. In addition, the rapid removal of sialic acid from solution might be advantageous to the bacterium to damp down host responses. This is N-acetylneuraminate epimerase 1 from Escherichia coli O6:H1 (strain CFT073 / ATCC 700928 / UPEC).